Consider the following 512-residue polypeptide: Sucrose transport protein SUC2 (512 aa).

Topologically, residues 1 to 31 (MVSHPMEKAANGASALETQTGELDQPERLRK) are cytoplasmic. Residues 32 to 52 (IISVSSIAAGVQFGWALQLSL) form a helical membrane-spanning segment. At 53 to 65 (LTPYVQLLGIPHK) the chain is on the extracellular side. A helical membrane pass occupies residues 66 to 86 (WASLIWLCGPISGMLVQPIVG). Residues 87-100 (YHSDRCTSRFGRRR) are Cytoplasmic-facing. The chain crosses the membrane as a helical span at residues 101–121 (PFIVAGAGLVTVAVFLIGYAA). At 122 to 138 (DIGHSMGDQLDKPPKTR) the chain is on the extracellular side. The helical transmembrane segment at 139–159 (AIAIFALGFWILDVANNTLQG) threads the bilayer. Residues 160–177 (PCRAFLADLSAGNAKKTR) are Cytoplasmic-facing. A helical transmembrane segment spans residues 178 to 198 (TANAFFSFFMAVGNVLGYAAG). Residues 199 to 223 (SYRNLYKVVPFTMTESCDLYCANLK) are Extracellular-facing. A helical transmembrane segment spans residues 224 to 244 (TCFFLSITLLLIVTFVSLCYV). Over 245-278 (KEKPWTPEPTADGKASNVPFFGEIFGAFKELKRP) the chain is Cytoplasmic. A helical transmembrane segment spans residues 279–299 (MWMLLIVTALNWIAWFPFLLF). The Extracellular portion of the chain corresponds to 300–332 (DTDWMGREVYGGNSDATATAASKKLYNDGVRAG). A helical membrane pass occupies residues 333-353 (ALGLMLNAIVLGFMSLGVEWI). Over 354 to 362 (GRKLGGAKR) the chain is Cytoplasmic. A helical membrane pass occupies residues 363–383 (LWGIVNFILAICLAMTVVVTK). Over 384–407 (QAENHRRDHGGAKTGPPGNVTAGA) the chain is Extracellular. N-linked (GlcNAc...) asparagine glycosylation occurs at Asn402. The helical transmembrane segment at 408–428 (LTLFAILGIPQAITFSIPFAL) threads the bilayer. Residues 429 to 440 (ASIFSTNSGAGQ) lie on the Cytoplasmic side of the membrane. Residues 441–461 (GLSLGVLNLAIVVPQMVISVG) form a helical membrane-spanning segment. The Extracellular portion of the chain corresponds to 462–473 (GGPFDELFGGGN). The chain crosses the membrane as a helical span at residues 474 to 494 (IPAFVLGAIAAAVSGVLALTV). Residues 495–512 (LPSPPPDAPAFKATMGFH) are Cytoplasmic-facing.

It belongs to the glycoside-pentoside-hexuronide (GPH) cation symporter transporter (TC 2.A.2.4) family. In terms of assembly, homodimer. Interacts with SUC3 and SUC4. As to expression, expressed in leaves and, to a lower extent, in roots, flowers and stems. Highly specific to the phloem, exclusively localized in companion cells (at protein level).

The protein resides in the cell membrane. The catalysed reaction is sucrose(out) + H(+)(out) = sucrose(in) + H(+)(in). Its pathway is glycan biosynthesis; sucrose metabolism. With respect to regulation, inhibited by protonophores (e.g. dinitrophenol and carbonyl cyanide m-chlorophenyl-hydrazone (CCCP)) and SH group inhibitors (e.g. N-ethylmaleimide (NEM) and p-chloromercuriphenyl sulphonic acid (PCMPS)). Responsible for the transport of sucrose into the cell, with the concomitant uptake of protons (symport system). Can also transport other glucosides such as maltose, arbutin (hydroquinone-beta-D-glucoside), salicin (2-(hydroxymethyl)phenyl-beta-D-glucoside), alpha-phenylglucoside, beta-phenylglucoside, alpha-paranitrophenylglucoside, beta-paranitrophenylglucoside, and paranitrophenyl-beta-thioglucoside. May also transport biotin. Required for apoplastic phloem sucrose loading in source tissues (e.g. leaves) in order to transport it to sink tissues (e.g. roots, flowers). This chain is Sucrose transport protein SUC2, found in Arabidopsis thaliana (Mouse-ear cress).